The primary structure comprises 434 residues: DENN domain-containing protein 11 (434 aa).

A disordered region spans residues 1 to 29 (MARRTDRAPLLDWAEGPGVSPAPETEQGE). In terms of domain architecture, uDENN spans 1 to 168 (MARRTDRAPL…QLEIPGHYTP (168 aa)). Residues 194–341 (LPPVHKHLYP…VNSADKEKYQ (148 aa)) form the cDENN domain. The dDENN domain maps to 343–434 (LNDQRQLLMY…MLVIDNPCCP (92 aa)).

Belongs to the DENND11 family.

Probable guanine nucleotide exchange factor (GEF). May promote the exchange of GDP to GTP, converting inactive GDP-bound small GTPases into their active GTP-bound form. In Xenopus laevis (African clawed frog), this protein is DENN domain-containing protein 11 (dennd11).